The sequence spans 267 residues: tRNA pseudouridine synthase A (267 aa).

D51 acts as the Nucleophile in catalysis. Y109 contacts substrate.

The protein belongs to the tRNA pseudouridine synthase TruA family. As to quaternary structure, homodimer.

It carries out the reaction uridine(38/39/40) in tRNA = pseudouridine(38/39/40) in tRNA. Functionally, formation of pseudouridine at positions 38, 39 and 40 in the anticodon stem and loop of transfer RNAs. This Staphylococcus aureus (strain USA300) protein is tRNA pseudouridine synthase A.